Reading from the N-terminus, the 417-residue chain is NADH-quinone oxidoreductase subunit D (417 aa).

This sequence belongs to the complex I 49 kDa subunit family. As to quaternary structure, NDH-1 is composed of 14 different subunits. Subunits NuoB, C, D, E, F, and G constitute the peripheral sector of the complex.

It is found in the cell inner membrane. The catalysed reaction is a quinone + NADH + 5 H(+)(in) = a quinol + NAD(+) + 4 H(+)(out). In terms of biological role, NDH-1 shuttles electrons from NADH, via FMN and iron-sulfur (Fe-S) centers, to quinones in the respiratory chain. The immediate electron acceptor for the enzyme in this species is believed to be ubiquinone. Couples the redox reaction to proton translocation (for every two electrons transferred, four hydrogen ions are translocated across the cytoplasmic membrane), and thus conserves the redox energy in a proton gradient. The chain is NADH-quinone oxidoreductase subunit D from Burkholderia vietnamiensis (strain G4 / LMG 22486) (Burkholderia cepacia (strain R1808)).